Reading from the N-terminus, the 807-residue chain is Glycerol-3-phosphate acyltransferase (807 aa).

The HXXXXD motif motif lies at 308–313; it reads CHRSHM.

This sequence belongs to the GPAT/DAPAT family.

It is found in the cell inner membrane. It catalyses the reaction sn-glycerol 3-phosphate + an acyl-CoA = a 1-acyl-sn-glycero-3-phosphate + CoA. Its pathway is phospholipid metabolism; CDP-diacylglycerol biosynthesis; CDP-diacylglycerol from sn-glycerol 3-phosphate: step 1/3. This chain is Glycerol-3-phosphate acyltransferase, found in Shewanella sp. (strain ANA-3).